A 271-amino-acid polypeptide reads, in one-letter code: MPELPEVEVTRQGIAPYLVDQTVVELIVRNASLRWPVPDLAHNIVGQTILSVRRRAKYLLIDTEAGITIVHLGMSGSLRILPRNTPVEKHDHIDLVLANGRMLRFNDPRRFGAWLWYELPEEAHPLLAKLGPEPLSEAFNPLQLLTALKGKKKAIKLCLMDNHIVVGVGNIYANEALFAAGIHPESEAGKIDIEKLTLLVVEVKQILAQAIKQGGTTLKDFTNADGKPGYFAQKLHVYGRGSKSCTHCGNLLSEIRLGQRTTVFCGLCQTK.

Pro2 functions as the Schiff-base intermediate with DNA in the catalytic mechanism. Glu3 (proton donor) is an active-site residue. Residue Lys57 is the Proton donor; for beta-elimination activity of the active site. DNA-binding residues include His90, Arg109, and Lys151. The segment at 236 to 270 (HVYGRGSKSCTHCGNLLSEIRLGQRTTVFCGLCQT) adopts an FPG-type zinc-finger fold. Arg260 serves as the catalytic Proton donor; for delta-elimination activity.

Belongs to the FPG family. Monomer. The cofactor is Zn(2+).

It carries out the reaction Hydrolysis of DNA containing ring-opened 7-methylguanine residues, releasing 2,6-diamino-4-hydroxy-5-(N-methyl)formamidopyrimidine.. The enzyme catalyses 2'-deoxyribonucleotide-(2'-deoxyribose 5'-phosphate)-2'-deoxyribonucleotide-DNA = a 3'-end 2'-deoxyribonucleotide-(2,3-dehydro-2,3-deoxyribose 5'-phosphate)-DNA + a 5'-end 5'-phospho-2'-deoxyribonucleoside-DNA + H(+). Functionally, involved in base excision repair of DNA damaged by oxidation or by mutagenic agents. Acts as a DNA glycosylase that recognizes and removes damaged bases. Has a preference for oxidized purines, such as 7,8-dihydro-8-oxoguanine (8-oxoG). Has AP (apurinic/apyrimidinic) lyase activity and introduces nicks in the DNA strand. Cleaves the DNA backbone by beta-delta elimination to generate a single-strand break at the site of the removed base with both 3'- and 5'-phosphates. In Shewanella denitrificans (strain OS217 / ATCC BAA-1090 / DSM 15013), this protein is Formamidopyrimidine-DNA glycosylase.